Consider the following 316-residue polypeptide: 4-hydroxy-3-methylbut-2-enyl diphosphate reductase (316 aa).

Cys-12 provides a ligand contact to [4Fe-4S] cluster. (2E)-4-hydroxy-3-methylbut-2-enyl diphosphate-binding residues include His-41 and His-74. Positions 41 and 74 each coordinate dimethylallyl diphosphate. 2 residues coordinate isopentenyl diphosphate: His-41 and His-74. A [4Fe-4S] cluster-binding site is contributed by Cys-96. Residue His-124 participates in (2E)-4-hydroxy-3-methylbut-2-enyl diphosphate binding. His-124 contributes to the dimethylallyl diphosphate binding site. An isopentenyl diphosphate-binding site is contributed by His-124. Catalysis depends on Glu-126, which acts as the Proton donor. (2E)-4-hydroxy-3-methylbut-2-enyl diphosphate is bound at residue Thr-167. Cys-197 is a binding site for [4Fe-4S] cluster. Residues Ser-225, Ser-226, Asn-227, and Ser-269 each contribute to the (2E)-4-hydroxy-3-methylbut-2-enyl diphosphate site. 4 residues coordinate dimethylallyl diphosphate: Ser-225, Ser-226, Asn-227, and Ser-269. Residues Ser-225, Ser-226, Asn-227, and Ser-269 each contribute to the isopentenyl diphosphate site.

Belongs to the IspH family. In terms of assembly, homodimer. The cofactor is [4Fe-4S] cluster.

The catalysed reaction is isopentenyl diphosphate + 2 oxidized [2Fe-2S]-[ferredoxin] + H2O = (2E)-4-hydroxy-3-methylbut-2-enyl diphosphate + 2 reduced [2Fe-2S]-[ferredoxin] + 2 H(+). The enzyme catalyses dimethylallyl diphosphate + 2 oxidized [2Fe-2S]-[ferredoxin] + H2O = (2E)-4-hydroxy-3-methylbut-2-enyl diphosphate + 2 reduced [2Fe-2S]-[ferredoxin] + 2 H(+). It functions in the pathway isoprenoid biosynthesis; dimethylallyl diphosphate biosynthesis; dimethylallyl diphosphate from (2E)-4-hydroxy-3-methylbutenyl diphosphate: step 1/1. Its pathway is isoprenoid biosynthesis; isopentenyl diphosphate biosynthesis via DXP pathway; isopentenyl diphosphate from 1-deoxy-D-xylulose 5-phosphate: step 6/6. Functionally, catalyzes the conversion of 1-hydroxy-2-methyl-2-(E)-butenyl 4-diphosphate (HMBPP) into a mixture of isopentenyl diphosphate (IPP) and dimethylallyl diphosphate (DMAPP). Acts in the terminal step of the DOXP/MEP pathway for isoprenoid precursor biosynthesis. In Cronobacter sakazakii (strain ATCC BAA-894) (Enterobacter sakazakii), this protein is 4-hydroxy-3-methylbut-2-enyl diphosphate reductase.